Consider the following 529-residue polypeptide: Bifunctional purine biosynthesis protein PurH (529 aa).

One can recognise an MGS-like domain in the interval 1-148; sequence MQQRRPVRRA…KNHKDVAIVV (148 aa).

Belongs to the PurH family.

The catalysed reaction is (6R)-10-formyltetrahydrofolate + 5-amino-1-(5-phospho-beta-D-ribosyl)imidazole-4-carboxamide = 5-formamido-1-(5-phospho-D-ribosyl)imidazole-4-carboxamide + (6S)-5,6,7,8-tetrahydrofolate. It carries out the reaction IMP + H2O = 5-formamido-1-(5-phospho-D-ribosyl)imidazole-4-carboxamide. The protein operates within purine metabolism; IMP biosynthesis via de novo pathway; 5-formamido-1-(5-phospho-D-ribosyl)imidazole-4-carboxamide from 5-amino-1-(5-phospho-D-ribosyl)imidazole-4-carboxamide (10-formyl THF route): step 1/1. It participates in purine metabolism; IMP biosynthesis via de novo pathway; IMP from 5-formamido-1-(5-phospho-D-ribosyl)imidazole-4-carboxamide: step 1/1. The chain is Bifunctional purine biosynthesis protein PurH from Klebsiella pneumoniae (strain 342).